The sequence spans 354 residues: Glycerol-1-phosphate dehydrogenase [NAD(P)+] (354 aa).

NAD(+) is bound by residues Gly102 to Asp106 and Thr124 to Ser127. Asp129 contacts substrate. Ser133 lines the NAD(+) pocket. Asp176 is a substrate binding site. 2 residues coordinate Zn(2+): Asp176 and His256. His260 contacts substrate. His272 is a Zn(2+) binding site.

Belongs to the glycerol-1-phosphate dehydrogenase family. Requires Zn(2+) as cofactor.

Its subcellular location is the cytoplasm. It catalyses the reaction sn-glycerol 1-phosphate + NAD(+) = dihydroxyacetone phosphate + NADH + H(+). The enzyme catalyses sn-glycerol 1-phosphate + NADP(+) = dihydroxyacetone phosphate + NADPH + H(+). The protein operates within membrane lipid metabolism; glycerophospholipid metabolism. Catalyzes the NAD(P)H-dependent reduction of dihydroxyacetonephosphate (DHAP or glycerone phosphate) to glycerol 1-phosphate (G1P). The G1P thus generated is used as the glycerophosphate backbone of phospholipids in the cellular membranes of Archaea. In Methanothrix thermoacetophila (strain DSM 6194 / JCM 14653 / NBRC 101360 / PT) (Methanosaeta thermophila), this protein is Glycerol-1-phosphate dehydrogenase [NAD(P)+].